The primary structure comprises 1293 residues: Enterobactin synthase component F (1293 aa).

Residues 1-301 (MSQHLPLVAA…NVLPLGIHIA (301 aa)) form an elongation/condensation region. The tract at residues 482-887 (SYREMREQVV…ALPDVEQAVT (406 aa)) is adenylation. The Carrier domain maps to 971 to 1046 (APKAGSETII…KLATIIDGEE (76 aa)). An O-(pantetheine 4'-phosphoryl)serine modification is found at serine 1006. Residues 1066–1293 (PTLFCFHPAS…GPIIRATLNR (228 aa)) are thioesterase. Residue histidine 1271 is the Proton acceptor; for thioesterase activity of the active site.

Belongs to the ATP-dependent AMP-binding enzyme family. EntF subfamily. As to quaternary structure, proteins EntB, EntD, EntE and EntF are the component of the enterobactin synthase. Components probably do not form a stable complex. EntF acts as a catalytic monomer. Pantetheine 4'-phosphate serves as cofactor. Post-translationally, 4'-phosphopantetheine is transferred from CoA to a specific serine of apo-EntF by EntD. Holo-EntF so formed is then acylated with seryl-AMP.

It is found in the cytoplasm. The catalysed reaction is 3 2,3-dihydroxybenzoate + 3 L-serine + 6 ATP = enterobactin + 6 AMP + 6 diphosphate + 4 H(+). It carries out the reaction holo-[peptidyl-carrier protein] + L-serine + ATP = L-seryl-[peptidyl-carrier protein] + AMP + diphosphate. It participates in siderophore biosynthesis; enterobactin biosynthesis. Its function is as follows. Involved in the biosynthesis of the siderophore enterobactin (enterochelin), which is a macrocyclic trimeric lactone of N-(2,3-dihydroxybenzoyl)-serine. EntF catalyzes the activation of L-serine via ATP-dependent PPi exchange reaction to form seryladenylate. Activated L-serine is loaded onto the peptidyl carrier domain via a thioester linkage to the phosphopanthetheine moiety, forming seryl-S-Ppant-EntF. EntF acts then as the sole catalyst for the formation of the three amide and three ester linkages found in enterobactin, using seryladenylate and 2,3-dihydroxybenzoate-S-Ppant-EntB (DHB-S-Ppant-EntB) as substrates, via the formation of a DHB-Ser-S-Ppant-EntF intermediate. In Escherichia coli O157:H7, this protein is Enterobactin synthase component F (entF).